Consider the following 474-residue polypeptide: Putative response regulator NtrX-like (474 aa).

Positions 5–121 (DVLIVDDEES…KLVILLTRAC (117 aa)) constitute a Response regulatory domain. A 4-aspartylphosphate modification is found at Asp54. One can recognise a Sigma-54 factor interaction domain in the interval 143-368 (LVGECSVTLK…LRNVVEWTLI (226 aa)). ATP-binding positions include 171–178 (GKVGSGKE) and 231–240 (ANNGTLYIDE).

Member of the two-component regulatory system RC0849/RC0948. The polypeptide is Putative response regulator NtrX-like (Rickettsia conorii (strain ATCC VR-613 / Malish 7)).